Reading from the N-terminus, the 426-residue chain is D-tagatose-1,6-bisphosphate aldolase subunit KbaZ (426 aa).

Belongs to the GatZ/KbaZ family. KbaZ subfamily. Forms a complex with KbaY.

It functions in the pathway carbohydrate metabolism; D-tagatose 6-phosphate degradation; D-glyceraldehyde 3-phosphate and glycerone phosphate from D-tagatose 6-phosphate: step 2/2. Its function is as follows. Component of the tagatose-1,6-bisphosphate aldolase KbaYZ that is required for full activity and stability of the Y subunit. Could have a chaperone-like function for the proper and stable folding of KbaY. When expressed alone, KbaZ does not show any aldolase activity. The chain is D-tagatose-1,6-bisphosphate aldolase subunit KbaZ from Escherichia fergusonii (strain ATCC 35469 / DSM 13698 / CCUG 18766 / IAM 14443 / JCM 21226 / LMG 7866 / NBRC 102419 / NCTC 12128 / CDC 0568-73).